The following is a 373-amino-acid chain: Spermidine/putrescine import ATP-binding protein PotA (373 aa).

Residues 11–241 (IELRSLKKSY…PSNLFVAKFI (231 aa)) enclose the ABC transporter domain. 43 to 50 (GPSGCGKT) provides a ligand contact to ATP.

Belongs to the ABC transporter superfamily. Spermidine/putrescine importer (TC 3.A.1.11.1) family. The complex is composed of two ATP-binding proteins (PotA), two transmembrane proteins (PotB and PotC) and a solute-binding protein (PotD).

It localises to the cell inner membrane. It catalyses the reaction ATP + H2O + polyamine-[polyamine-binding protein]Side 1 = ADP + phosphate + polyamineSide 2 + [polyamine-binding protein]Side 1.. Its function is as follows. Part of the ABC transporter complex PotABCD involved in spermidine/putrescine import. Responsible for energy coupling to the transport system. The polypeptide is Spermidine/putrescine import ATP-binding protein PotA (Mannheimia succiniciproducens (strain KCTC 0769BP / MBEL55E)).